We begin with the raw amino-acid sequence, 600 residues long: DNA repair and recombination protein mus-11 (600 aa).

The DNA-binding element occupies 148–152 (KRALR). Residues 268-319 (LNPQAQQSRPLSRSGSTGSLNTRQQPQNSHQFTARAQSRPPQQQLNSNQSRP) are compositionally biased toward polar residues. Disordered stretches follow at residues 268–357 (LNPQ…AGAA) and 387–600 (APKP…QRLA). Low complexity-rich tracts occupy residues 325–343 (NNSS…TTPQ) and 458–470 (ARSA…RAGP). Polar residues predominate over residues 502–512 (GFSSSPSTNRG). Composition is skewed to low complexity over residues 540–564 (SATT…APSA) and 577–591 (ANAS…ATSG).

This sequence belongs to the RAD52 family. In terms of assembly, part of a complex that includes mei-3/rad51 and mus-11/rad52.

It is found in the nucleus. In terms of biological role, involved in DNA double-strand break (DSB) repair and recombination. Promotes the annealing of complementary single-stranded DNA and by stimulation of the mei-3/rad51 recombinase. This Neurospora crassa (strain ATCC 24698 / 74-OR23-1A / CBS 708.71 / DSM 1257 / FGSC 987) protein is DNA repair and recombination protein mus-11 (mus-11).